The sequence spans 401 residues: Probable 2,3-bisphosphoglycerate-independent phosphoglycerate mutase (401 aa).

Belongs to the BPG-independent phosphoglycerate mutase family. A-PGAM subfamily.

It catalyses the reaction (2R)-2-phosphoglycerate = (2R)-3-phosphoglycerate. It functions in the pathway carbohydrate degradation; glycolysis; pyruvate from D-glyceraldehyde 3-phosphate: step 3/5. Its function is as follows. Catalyzes the interconversion of 2-phosphoglycerate and 3-phosphoglycerate. The protein is Probable 2,3-bisphosphoglycerate-independent phosphoglycerate mutase of Thermotoga petrophila (strain ATCC BAA-488 / DSM 13995 / JCM 10881 / RKU-1).